The following is a 251-amino-acid chain: 3-deoxy-manno-octulosonate cytidylyltransferase (251 aa).

Belongs to the KdsB family.

The protein resides in the cytoplasm. The catalysed reaction is 3-deoxy-alpha-D-manno-oct-2-ulosonate + CTP = CMP-3-deoxy-beta-D-manno-octulosonate + diphosphate. It participates in nucleotide-sugar biosynthesis; CMP-3-deoxy-D-manno-octulosonate biosynthesis; CMP-3-deoxy-D-manno-octulosonate from 3-deoxy-D-manno-octulosonate and CTP: step 1/1. The protein operates within bacterial outer membrane biogenesis; lipopolysaccharide biosynthesis. In terms of biological role, activates KDO (a required 8-carbon sugar) for incorporation into bacterial lipopolysaccharide in Gram-negative bacteria. This chain is 3-deoxy-manno-octulosonate cytidylyltransferase, found in Rhizobium etli (strain ATCC 51251 / DSM 11541 / JCM 21823 / NBRC 15573 / CFN 42).